Here is an 88-residue protein sequence, read N- to C-terminus: UPF0250 protein Sfri_0694 (88 aa).

This sequence belongs to the UPF0250 family.

The protein is UPF0250 protein Sfri_0694 of Shewanella frigidimarina (strain NCIMB 400).